A 367-amino-acid chain; its full sequence is tRNA/tmRNA (uracil-C(5))-methyltransferase (367 aa).

The S-adenosyl-L-methionine site is built by Gln190, Tyr218, Asn223, Glu239, and Asp299. Cys324 (nucleophile) is an active-site residue. The active-site Proton acceptor is the Glu358.

It belongs to the class I-like SAM-binding methyltransferase superfamily. RNA M5U methyltransferase family. TrmA subfamily.

The catalysed reaction is uridine(54) in tRNA + S-adenosyl-L-methionine = 5-methyluridine(54) in tRNA + S-adenosyl-L-homocysteine + H(+). It carries out the reaction uridine(341) in tmRNA + S-adenosyl-L-methionine = 5-methyluridine(341) in tmRNA + S-adenosyl-L-homocysteine + H(+). Functionally, dual-specificity methyltransferase that catalyzes the formation of 5-methyluridine at position 54 (m5U54) in all tRNAs, and that of position 341 (m5U341) in tmRNA (transfer-mRNA). In Musicola paradisiaca (strain Ech703) (Dickeya paradisiaca), this protein is tRNA/tmRNA (uracil-C(5))-methyltransferase.